The sequence spans 197 residues: ATP-dependent Clp protease proteolytic subunit (197 aa).

Serine 98 functions as the Nucleophile in the catalytic mechanism. Histidine 123 is an active-site residue.

Belongs to the peptidase S14 family. As to quaternary structure, fourteen ClpP subunits assemble into 2 heptameric rings which stack back to back to give a disk-like structure with a central cavity, resembling the structure of eukaryotic proteasomes.

It localises to the cytoplasm. It catalyses the reaction Hydrolysis of proteins to small peptides in the presence of ATP and magnesium. alpha-casein is the usual test substrate. In the absence of ATP, only oligopeptides shorter than five residues are hydrolyzed (such as succinyl-Leu-Tyr-|-NHMec, and Leu-Tyr-Leu-|-Tyr-Trp, in which cleavage of the -Tyr-|-Leu- and -Tyr-|-Trp bonds also occurs).. Its function is as follows. Cleaves peptides in various proteins in a process that requires ATP hydrolysis. Has a chymotrypsin-like activity. Plays a major role in the degradation of misfolded proteins. The chain is ATP-dependent Clp protease proteolytic subunit from Enterococcus faecalis (strain ATCC 700802 / V583).